The sequence spans 498 residues: ATP synthase subunit beta, chloroplastic (498 aa).

172 to 179 (GGAGVGKT) lines the ATP pocket.

Belongs to the ATPase alpha/beta chains family. As to quaternary structure, F-type ATPases have 2 components, CF(1) - the catalytic core - and CF(0) - the membrane proton channel. CF(1) has five subunits: alpha(3), beta(3), gamma(1), delta(1), epsilon(1). CF(0) has four main subunits: a(1), b(1), b'(1) and c(9-12).

It localises to the plastid. The protein resides in the chloroplast thylakoid membrane. The enzyme catalyses ATP + H2O + 4 H(+)(in) = ADP + phosphate + 5 H(+)(out). Functionally, produces ATP from ADP in the presence of a proton gradient across the membrane. The catalytic sites are hosted primarily by the beta subunits. This chain is ATP synthase subunit beta, chloroplastic, found in Cinnamomum camphora (Camphor tree).